The chain runs to 264 residues: Galectin-3 (264 aa).

Residues Met1–Pro105 are disordered. Ala2 carries the N-acetylalanine modification. Phosphoserine; by CK1 is present on Ser6. 8 repeat units span residues Tyr35–Ala43, Tyr44–Ala52, Tyr53–Ala61, Tyr62–Ala70, Tyr71–Ala79, Tyr80–Ala88, Tyr89–Ala97, and Phe98–Ala107. The 9 X 9 AA tandem repeats of Y-P-G-X(3)-P-[GS]-A stretch occupies residues Tyr35–Gly114. Residues Gly37–Gly46 are compositionally biased toward low complexity. Residues Gln47–Thr75 are compositionally biased toward pro residues. Positions Ala76–Pro105 are enriched in low complexity. A 9; truncated repeat occupies Tyr108–Gly114. Residues Tyr132 to Ala262 form the Galectin domain. Trp195–Gln201 is an a beta-D-galactoside binding site. Ser202 is modified (phosphoserine). The Nuclear export signal motif lies at Lys240–Thr255.

Probably forms homo- or heterodimers. Interacts with DMBT1. Interacts with CD6 and ALCAM. Forms a complex with the ITGA3, ITGB1 and CSPG4. Interacts with LGALS3BP, LYPD3, ZFTRAF1 and UACA. Interacts with TRIM16; this interaction mediates autophagy of damage endomembranes. Interacts with and inhibits by binding NCR3/NKp30. As to expression, the highest levels are found in activated macrophages.

It localises to the cytoplasm. The protein resides in the nucleus. It is found in the secreted. Functionally, galactose-specific lectin which binds IgE. May mediate with the alpha-3, beta-1 integrin the stimulation by CSPG4 of endothelial cells migration. Together with DMBT1, required for terminal differentiation of columnar epithelial cells during early embryogenesis. In the nucleus: acts as a pre-mRNA splicing factor. Involved in acute inflammatory responses including neutrophil activation and adhesion, chemoattraction of monocytes macrophages, opsonization of apoptotic neutrophils, and activation of mast cells. Together with TRIM16, coordinates the recognition of membrane damage with mobilization of the core autophagy regulators ATG16L1 and BECN1 in response to damaged endomembranes. When secreted, interacts with NK cell-activating receptor NCR3/NKp30 acting as an inhibitory ligand which antagonizes NK cell attack. This Mus musculus (Mouse) protein is Galectin-3 (Lgals3).